A 153-amino-acid chain; its full sequence is Aspartate carbamoyltransferase regulatory chain (153 aa).

Positions 109, 114, 138, and 141 each coordinate Zn(2+).

Belongs to the PyrI family. Contains catalytic and regulatory chains. Zn(2+) serves as cofactor.

Involved in allosteric regulation of aspartate carbamoyltransferase. This is Aspartate carbamoyltransferase regulatory chain from Edwardsiella ictaluri (strain 93-146).